We begin with the raw amino-acid sequence, 93 residues long: Small ribosomal subunit protein uS19 (93 aa).

The protein belongs to the universal ribosomal protein uS19 family.

Protein S19 forms a complex with S13 that binds strongly to the 16S ribosomal RNA. The polypeptide is Small ribosomal subunit protein uS19 (Desulfitobacterium hafniense (strain DSM 10664 / DCB-2)).